Reading from the N-terminus, the 760-residue chain is Photosystem I P700 chlorophyll a apoprotein A1 (760 aa).

The tract at residues 1 to 22 is disordered; that stretch reads MTISPPESGEKDKKILESPVKA. Over residues 8 to 22 the composition is skewed to basic and acidic residues; the sequence is SGEKDKKILESPVKA. 8 consecutive transmembrane segments (helical) span residues 76 to 99, 162 to 185, 201 to 225, 309 to 327, 368 to 391, 407 to 433, 455 to 477, and 551 to 569; these read IFSA…FHGA, LMAL…FHYH, MNHH…HIGA, IAHH…GHMY, RHAQ…HHMY, LGLF…IAMV, ALIS…LYIH, and LMIH…LILL. Residues C593 and C602 each coordinate [4Fe-4S] cluster. 2 helical membrane passes run 609-630 and 674-696; these read HVFL…HFSW and ISMY…MFLF. Residue H685 participates in divinylchlorophyll a' binding. Divinyl chlorophyll a-binding residues include M693 and Y701. W702 lines the phylloquinone pocket. Residues 734–754 form a helical membrane-spanning segment; the sequence is AVGVTHFLVGGIATTWAFFHA.

It belongs to the PsaA/PsaB family. The PsaA/B heterodimer binds the P700 divinyl chlorophyll special pair and subsequent electron acceptors. PSI consists of a core antenna complex that captures photons, and an electron transfer chain that converts photonic excitation into a charge separation. The cyanobacterial PSI reaction center is composed of one copy each of PsaA,B,C,D,E,F,I,J,K,L,M and X, and forms trimeric complexes. Requires PSI electron transfer chain: 5 divinyl chlorophyll a, 1 divinyl chlorophyll a', 2 phylloquinones and 3 4Fe-4S clusters. PSI core antenna: 90 divinyl chlorophyll a, 22 carotenoids, 3 phospholipids and 1 galactolipid. P700 is a divinyl chlorophyll a/divinyl chlorophyll a' dimer, A0 is one or more divinyl chlorophyll a, A1 is one or both phylloquinones and FX is a shared 4Fe-4S iron-sulfur center. as cofactor.

Its subcellular location is the cellular thylakoid membrane. The enzyme catalyses reduced [plastocyanin] + hnu + oxidized [2Fe-2S]-[ferredoxin] = oxidized [plastocyanin] + reduced [2Fe-2S]-[ferredoxin]. Its function is as follows. PsaA and PsaB bind P700, the primary electron donor of photosystem I (PSI), as well as the electron acceptors A0, A1 and FX. PSI is a plastocyanin/cytochrome c6-ferredoxin oxidoreductase, converting photonic excitation into a charge separation, which transfers an electron from the donor P700 chlorophyll pair to the spectroscopically characterized acceptors A0, A1, FX, FA and FB in turn. Oxidized P700 is reduced on the lumenal side of the thylakoid membrane by plastocyanin or cytochrome c6. In Prochlorococcus marinus (strain MIT 9515), this protein is Photosystem I P700 chlorophyll a apoprotein A1.